The sequence spans 551 residues: DNA double-strand break repair helicase HerA (551 aa).

Residues Arg152, 161–166 (GAGKSN), and 507–508 (RI) contribute to the ATP site.

Belongs to the HerA family. Homohexamer. Interacts with NurA.

It carries out the reaction Couples ATP hydrolysis with the unwinding of duplex DNA at the replication fork by translocating in the 5'-3' direction. This creates two antiparallel DNA single strands (ssDNA). The leading ssDNA polymer is the template for DNA polymerase III holoenzyme which synthesizes a continuous strand.. The catalysed reaction is ATP + H2O = ADP + phosphate + H(+). The enzyme catalyses Couples ATP hydrolysis with the unwinding of duplex DNA by translocating in the 3'-5' direction.. Its activity is regulated as follows. Helicase activity is stimulated in the presence of NurA. Its function is as follows. Involved in DNA double-strand break (DSB) repair. Probably acts with NurA to stimulate resection of the 5' strand and produce the long 3' single-strand that is required for RadA loading. Has DNA-dependent ATPase activity and DNA helicase activity. The sequence is that of DNA double-strand break repair helicase HerA from Pyrococcus furiosus (strain ATCC 43587 / DSM 3638 / JCM 8422 / Vc1).